Here is a 651-residue protein sequence, read N- to C-terminus: MGKKHKKHKSDRHFYEEYVEKPLKLVLKVGGSEVTELSTGSSGHDSSLFEDRSDHDKHKDRKRKKRKKGEKQAPGEEKGRKRRRVKEDKKKRDRDRAENEVDRDLQCHVPIRLDLPPEKPLTSSLAKQEEVEQTPLQEALNQLMRQLQRKDPSAFFSFPVTDFIAPGYSMIIKHPMDFSTMKEKIKNNDYQSIEELKDNFKLMCTNAMIYNKPETIYYKAAKKLLHSGMKILSQERIQSLKQSIDFMSDLQKTRKQKERTDACQSGEDSGCWQREREDSGDAETQAFRSPAKDNKRKDKDVLEDKWRSSNSEREHEQIERVVQESGGKLTRRLANSQCEFERRKPDGTTTLGLLHPVDPIVGEPGYCPVRLGMTTGRLQSGVNTLQGFKEDKRNRVTPVLYLNYGPYSSYAPHYDSTFANISKDDSDLIYSTYGEDSDLPNNFSISEFLATCQDYPYVMADSLLDVLTKGGHSRSLQDLDMSSPEDEGQTRALDTAKEAEITQIEPTGRLESSSQDRLTALQAVTTFGAPAEVFDSEEAEVFQRKLDETTRLLRELQEAQNERLSTRPPPNMICLLGPSYREMYLAEQVTNNLKELTQQVTPGDVVSIHGVRKAMGISVPSPIVGNSFVDLTGECEEPKETSTAECGPDAS.

A Glycyl lysine isopeptide (Lys-Gly) (interchain with G-Cter in SUMO2) cross-link involves residue Lys21. Residues Val34 to Arg103 are disordered. The segment covering Thr35 to Asp45 has biased composition (polar residues). The segment covering Ser47–Lys57 has biased composition (basic and acidic residues). Over residues His58–Gly69 the composition is skewed to basic residues. Positions Lys65–Arg96 match the Nuclear localization signal motif. Over residues Glu70–Arg103 the composition is skewed to basic and acidic residues. Residues Lys127, Lys186, Lys197, Lys201, Lys212, and Lys241 each participate in a glycyl lysine isopeptide (Lys-Gly) (interchain with G-Cter in SUMO2) cross-link. A Bromo domain is found at Val131 to Glu235. Positions Lys252 to Glu316 are disordered. Phosphoserine occurs at positions 279 and 289. Basic and acidic residues predominate over residues Pro290 to Glu316. Residue Lys305 forms a Glycyl lysine isopeptide (Lys-Gly) (interchain with G-Cter in SUMO2) linkage. Lys328 bears the N6-acetyllysine mark. Residue Lys344 forms a Glycyl lysine isopeptide (Lys-Gly) (interchain with G-Cter in SUMO2) linkage. At Ser380 the chain carries Phosphoserine. Residue Lys389 forms a Glycyl lysine isopeptide (Lys-Gly) (interchain with G-Cter in SUMO2) linkage. Ser475, Ser482, and Ser483 each carry phosphoserine. Residues Ser536–Arg567 are a coiled coil. Ser621 carries the phosphoserine modification.

In terms of assembly, interacts with IRF2 and HNRPUL1. Interacts (via N-terminus) with TP53. Interacts (via C-terminus) with EP300. Interacts with BRCA1. Interacts (via bromo domain) with histone H3 (via N-terminus) acetylated at 'Lys-14' (H3K14ac). Has low affinity for histone H3 acetylated at 'Lys-9' (H3K9ac). Has the highest affinity for histone H3 that is acetylated both at 'Lys-9' (H3K9ac) and at 'Lys-14' (H3K14ac). Has very low affinity for non-acetylated histone H3. Interacts (via bromo domain) with histone H4 (via N-terminus) acetylated at 'Lys-8' (H3K8ac) (in vitro). Interacts with TRIM24, PTPN13 and DVL1. Identified in a complex with SMARCA4/BRG1, SMARCC1/BAF155, SMARCE1/BAF57, DPF2/BAF45D and ARID2, subunits of the SWI/SNF-B (PBAF) chromatin remodeling complex. Ubiquitous.

The protein localises to the nucleus. The protein resides in the chromosome. Its function is as follows. Acts both as coactivator and as corepressor. May play a role in chromatin remodeling. Transcriptional corepressor that down-regulates the expression of target genes. Binds to target promoters, leading to increased histone H3 acetylation at 'Lys-9' (H3K9ac). Binds to the ESR1 promoter. Recruits BRCA1 and POU2F1 to the ESR1 promoter. Coactivator for TP53-mediated activation of transcription of a set of target genes. Required for TP53-mediated cell-cycle arrest in response to oncogene activation. Promotes acetylation of TP53 at 'Lys-382', and thereby promotes efficient recruitment of TP53 to target promoters. Inhibits cell cycle progression from G1 to S phase. Activator of the Wnt signaling pathway in a DVL1-dependent manner by negatively regulating the GSK3B phosphotransferase activity. Induces dephosphorylation of GSK3B at 'Tyr-216'. Down-regulates TRIM24-mediated activation of transcriptional activation by AR. The chain is Bromodomain-containing protein 7 (Brd7) from Mus musculus (Mouse).